The sequence spans 217 residues: Protein MODIFYING WALL LIGNIN-2 (217 aa).

An N-terminal signal peptide occupies residues 1–23; that stretch reads MHNLFLYSVVFSLGLVSFITCFA. The Cytoplasmic portion of the chain corresponds to 24–51; sequence AEFKRTQKEDIRWDTERNCYVPGSHAFG. Residues 52–72 form a helical membrane-spanning segment; it reads LGSAAVLCFCLAQIVGNIVVF. Residues 73-94 are Extracellular-facing; the sequence is RNHRTRTKREDGYKITDLTLPT. The helical transmembrane segment at 95–115 threads the bilayer; it reads VLLLLSWSNFVVVVLILSTAI. The Cytoplasmic segment spans residues 116–137; sequence SMSRAQAYGEGWLDEDCYLVKD. A helical transmembrane segment spans residues 138–158; the sequence is GVFAASGCLAILGLGALTISA. The Extracellular portion of the chain corresponds to 159 to 217; it reads TRIKVKKQQQLVQVVIKDQNQDQRRSMEEEQKHDEHQTNKSESVIHLVEEVSSTNISRI. Asn197 and Asn213 each carry an N-linked (GlcNAc...) asparagine glycan.

It belongs to the DESIGUAL family.

It is found in the cell membrane. In terms of biological role, together with MWL1, contributes to secondary cell wall biology, specifically lignin biosynthesis. This is Protein MODIFYING WALL LIGNIN-2 from Arabidopsis thaliana (Mouse-ear cress).